Here is a 475-residue protein sequence, read N- to C-terminus: F-box/kelch-repeat protein At1g22040 (475 aa).

The segment at 1 to 28 (MGSVMSLSCSKRKATSQDVECSSESRKR) is disordered. In terms of domain architecture, F-box spans 41 to 87 (CRLIPSLPDELSIQILARLPRICYSSVRLVSRRWRSAVSTSEVYSLR). Kelch repeat units lie at residues 94–140 (EEWL…KSLS), 182–228 (GLYV…VLNK), 229–279 (KLYV…AFLA), 306–350 (PFFV…VDGE), and 352–401 (YAFD…GFHG).

This chain is F-box/kelch-repeat protein At1g22040, found in Arabidopsis thaliana (Mouse-ear cress).